The sequence spans 164 residues: Galectin-3 (164 aa).

Positions 9–154 constitute a Galectin domain; sequence STVDLSEPLK…FSDVLGVTVL (146 aa). 6 residues coordinate a carbohydrate: asparagine 45, arginine 64, asparagine 73, arginine 81, glutamate 84, and asparagine 138.

In terms of assembly, homotetramer. Oligomerization is required for carbohydrate binding.

It localises to the secreted. It is found in the extracellular space. Its subcellular location is the extracellular matrix. The protein resides in the cell wall. Functionally, binds complex carbohydrates, such as chitooligosaccharides. Does not bind lactose. May play a role in fruiting body formation. The protein is Galectin-3 (Cgl3) of Coprinopsis cinerea (Inky cap fungus).